The sequence spans 277 residues: uncharacterized protein (277 aa).

The disordered stretch occupies residues 232–262 (NNESAICESQASSKEDERSDKTTSSSKKKSF). The span at 234 to 243 (ESAICESQAS) shows a compositional bias: polar residues.

It is found in the cytoplasm. Its subcellular location is the nucleus. This is an uncharacterized protein from Schizosaccharomyces pombe (strain 972 / ATCC 24843) (Fission yeast).